Consider the following 205-residue polypeptide: Holliday junction branch migration complex subunit RuvA (205 aa).

The tract at residues 1–62 (MFEYVTGYVE…EDIMALYGFK (62 aa)) is domain I. The segment at 63–141 (TREERLLFTK…DVVPDAFVDL (79 aa)) is domain II. The interval 142 to 152 (FSDTESFDTKK) is flexible linker. Residues 153 to 205 (GSSVELDEALEALRALGYAEREVSRVVPELLKESLTTDQYIKKALSLLLNGKR) are domain III.

It belongs to the RuvA family. Homotetramer. Forms an RuvA(8)-RuvB(12)-Holliday junction (HJ) complex. HJ DNA is sandwiched between 2 RuvA tetramers; dsDNA enters through RuvA and exits via RuvB. An RuvB hexamer assembles on each DNA strand where it exits the tetramer. Each RuvB hexamer is contacted by two RuvA subunits (via domain III) on 2 adjacent RuvB subunits; this complex drives branch migration. In the full resolvosome a probable DNA-RuvA(4)-RuvB(12)-RuvC(2) complex forms which resolves the HJ.

The protein resides in the cytoplasm. Its function is as follows. The RuvA-RuvB-RuvC complex processes Holliday junction (HJ) DNA during genetic recombination and DNA repair, while the RuvA-RuvB complex plays an important role in the rescue of blocked DNA replication forks via replication fork reversal (RFR). RuvA specifically binds to HJ cruciform DNA, conferring on it an open structure. The RuvB hexamer acts as an ATP-dependent pump, pulling dsDNA into and through the RuvAB complex. HJ branch migration allows RuvC to scan DNA until it finds its consensus sequence, where it cleaves and resolves the cruciform DNA. The chain is Holliday junction branch migration complex subunit RuvA from Bacillus mycoides (strain KBAB4) (Bacillus weihenstephanensis).